A 362-amino-acid polypeptide reads, in one-letter code: Histidinol-phosphate aminotransferase (362 aa).

An N6-(pyridoxal phosphate)lysine modification is found at K222.

Belongs to the class-II pyridoxal-phosphate-dependent aminotransferase family. Histidinol-phosphate aminotransferase subfamily. Homodimer. It depends on pyridoxal 5'-phosphate as a cofactor.

It carries out the reaction L-histidinol phosphate + 2-oxoglutarate = 3-(imidazol-4-yl)-2-oxopropyl phosphate + L-glutamate. The protein operates within amino-acid biosynthesis; L-histidine biosynthesis; L-histidine from 5-phospho-alpha-D-ribose 1-diphosphate: step 7/9. The sequence is that of Histidinol-phosphate aminotransferase from Shewanella amazonensis (strain ATCC BAA-1098 / SB2B).